A 245-amino-acid chain; its full sequence is MHPQGRAAPPQLLLGLFLVLLLLLQLSAPISASENPKVKQKALIRQREVVDLYNGMCLQGPAGVPGRDGSPGANGIPGTPGIPGRDGFKGEKGECLRESFEESWTPNYKQCSWSSLNYGIDLGKIAECTFTKMRSNSALRVLFSGSLRLKCRNACCQRWYFTFNGAECSGPLPIEAIIYLDQGSPELNSTINIHRTSSVEGLCEGIGAGLVDVAIWVGTCSDYPKGDASTGWNSVSRIIIEELPK.

An N-terminal signal peptide occupies residues 1–32 (MHPQGRAAPPQLLLGLFLVLLLLLQLSAPISA). The Collagen-like domain maps to 59–92 (QGPAGVPGRDGSPGANGIPGTPGIPGRDGFKGEK). The segment at 64-87 (VPGRDGSPGANGIPGTPGIPGRDG) is disordered. Asn188 carries an N-linked (GlcNAc...) asparagine glycan.

Post-translationally, N-glycosylated.

It localises to the secreted. Its subcellular location is the extracellular space. It is found in the extracellular matrix. Its function is as follows. May act as a negative regulator of collagen matrix deposition. The protein is Collagen triple helix repeat-containing protein 1 (Cthrc1) of Mus musculus (Mouse).